The primary structure comprises 474 residues: Methylenetetrahydrofolate--tRNA-(uracil-5-)-methyltransferase TrmFO (474 aa).

15–20 (GAGLAG) provides a ligand contact to FAD. Residues 453–474 (PLLPTAPDTTGAAGEETTQAES) are disordered.

It belongs to the MnmG family. TrmFO subfamily. FAD serves as cofactor.

It is found in the cytoplasm. It catalyses the reaction uridine(54) in tRNA + (6R)-5,10-methylene-5,6,7,8-tetrahydrofolate + NADH + H(+) = 5-methyluridine(54) in tRNA + (6S)-5,6,7,8-tetrahydrofolate + NAD(+). The enzyme catalyses uridine(54) in tRNA + (6R)-5,10-methylene-5,6,7,8-tetrahydrofolate + NADPH + H(+) = 5-methyluridine(54) in tRNA + (6S)-5,6,7,8-tetrahydrofolate + NADP(+). Its function is as follows. Catalyzes the folate-dependent formation of 5-methyl-uridine at position 54 (M-5-U54) in all tRNAs. This is Methylenetetrahydrofolate--tRNA-(uracil-5-)-methyltransferase TrmFO from Nitratidesulfovibrio vulgaris (strain ATCC 29579 / DSM 644 / CCUG 34227 / NCIMB 8303 / VKM B-1760 / Hildenborough) (Desulfovibrio vulgaris).